The primary structure comprises 186 residues: Casparian strip membrane protein 3 (186 aa).

Residues 1–26 (MKAGALELGEGSKTSIPRGGVNRGIS) are Cytoplasmic-facing. Residues 27–47 (ILDFILRLITIIGTLGSAIAM) form a helical membrane-spanning segment. At 48 to 74 (GTTNETLPFFTQFTQFRAEYDDLPTFT) the chain is on the extracellular side. An N-linked (GlcNAc...) asparagine glycan is attached at N51. The chain crosses the membrane as a helical span at residues 75–95 (FFVIANSIVSGYLVLSLPMSI). Residues 96–107 (LHIVRSGARASR) lie on the Cytoplasmic side of the membrane. Residues 108 to 128 (IVLIFFDTAMLALLTAAASAA) form a helical membrane-spanning segment. The Extracellular portion of the chain corresponds to 129–161 (SAIVYLAHKGNAQANWFAICQQFKSFCERISGS). Residues 162–182 (LIGSFGGIILFILLVLLSAVA) traverse the membrane as a helical segment. At 183 to 186 (LSRC) the chain is on the cytoplasmic side.

Belongs to the Casparian strip membrane proteins (CASP) family. In terms of assembly, homodimer and heterodimers.

The protein resides in the cell membrane. In terms of biological role, regulates membrane-cell wall junctions and localized cell wall deposition. Required for establishment of the Casparian strip membrane domain (CSD) and the subsequent formation of Casparian strips, a cell wall modification of the root endodermis that determines an apoplastic barrier between the intraorganismal apoplasm and the extraorganismal apoplasm and prevents lateral diffusion. The polypeptide is Casparian strip membrane protein 3 (Vitis vinifera (Grape)).